We begin with the raw amino-acid sequence, 396 residues long: Serine/threonine-protein kinase VRK1 (396 aa).

The Protein kinase domain maps to 37 to 317 (WKLGSPIGQG…LLDYVEKPLY (281 aa)). ATP is bound by residues 43–51 (IGQGGFGCI) and Lys71. Lys71 is covalently cross-linked (Glycyl lysine isopeptide (Lys-Gly) (interchain with G-Cter in SUMO2)). Asp177 serves as the catalytic Proton acceptor. The tract at residues 352 to 396 (KPVAKKRKKEAEESVESSVEDMECSDKQTEEATQTRSKTRKRVQK) is disordered. Residues 364-374 (ESVESSVEDME) show a composition bias toward acidic residues. Position 376 is a phosphoserine (Ser376). The tract at residues 387-393 (RSKTRKR) is required for interaction with the nucleosome.

It belongs to the protein kinase superfamily. CK1 Ser/Thr protein kinase family. VRK subfamily. In terms of assembly, interacts with HDAC1, KAT2B, SETDB1, KDM3A and KDM4A. Associates with the nucleosome through interactions with nucleosome DNA, histone H2A and histone H2B; the interaction with H2A and H2B is mediated by the nucleosome acidic patch, a cluster of negatively charged residues of H2A and H2B forming a cleft within the nucleosome core. Post-translationally, autophosphorylated at various serine and threonine residues. Autophosphorylation does not impair its ability to phosphorylate p53/TP53. Phosphorylation by PLK3 leads to induction of Golgi fragmentation during mitosis.

The protein localises to the nucleus. Its subcellular location is the cytoplasm. It localises to the cajal body. It carries out the reaction L-seryl-[protein] + ATP = O-phospho-L-seryl-[protein] + ADP + H(+). It catalyses the reaction L-threonyl-[protein] + ATP = O-phospho-L-threonyl-[protein] + ADP + H(+). Active in presence of Mn(2+), Mg(2+) and Zn(2+), but is not functional with Ca(2+) or Cu(2+). Has a higher affinity for Mn(2+) than for Mg(2+). RAN inhibits its autophosphorylation and its ability to phosphorylate histone H3. Serine/threonine kinase involved in the regulation of key cellular processes including the cell cycle, nuclear condensation, transcription regulation, and DNA damage response. Controls chromatin organization and remodeling by mediating phosphorylation of histone H3 on 'Thr-4' and histone H2AX (H2aXT4ph). It also phosphorylates KAT5 in response to DNA damage, promoting KAT5 association with chromatin and histone acetyltransferase activity. Is involved in the regulation of cell cycle progression of neural progenitors, and is required for proper cortical neuronal migration. Is involved in neurite elongation and branching in motor neurons, and has an essential role in Cajal bodies assembly, acting through COIL phosphorylation and the control of coilin degradation. Involved in Golgi disassembly during the cell cycle: following phosphorylation by PLK3 during mitosis, it is required to induce Golgi fragmentation. Phosphorylates BANF1: disrupts its ability to bind DNA, reduces its binding to LEM domain-containing proteins and causes its relocalization from the nucleus to the cytoplasm. Phosphorylates TP53BP1 and p53/TP53 on 'Thr-18', preventing the interaction between p53/TP53 and MDM2. Phosphorylates ATF2 which activates its transcriptional activity. Phosphorylates JUN. This chain is Serine/threonine-protein kinase VRK1 (VRK1), found in Bos taurus (Bovine).